The chain runs to 311 residues: MAYKDLLNCKIITAFITPFHEDGSINFGAIPDLIEHLLAHHTDGILLAGTTAESPTLTHDEELELFAAVQKVVKGRVPLIAGVGTNETRDSIEFVKEVDAFGGFAAGLAIVPYYNKPSQEGMYQHFKAIADASNLPIIIYNIPGRVVVEMTPETMLRLAEHPNIIGVKECTSLANMAYLIEHRPEEFLIYTGEDGDAFHAMNLGADGVISVASHTNGDEMFEMLDAIEHNDIKKAAAIQRKFIPKVNALFSYPSPAPVKAVLNYLGFAAGPTRLPLVPAPEEDAKRIIKVVVDGDYQATKETVKGVLRPDY.

Pyruvate is bound at residue Thr51. Catalysis depends on Tyr140, which acts as the Proton donor/acceptor. Lys168 (schiff-base intermediate with substrate) is an active-site residue. Residue Ile209 coordinates pyruvate.

It belongs to the DapA family. In terms of assembly, homotetramer; dimer of dimers.

Its subcellular location is the cytoplasm. The catalysed reaction is L-aspartate 4-semialdehyde + pyruvate = (2S,4S)-4-hydroxy-2,3,4,5-tetrahydrodipicolinate + H2O + H(+). It functions in the pathway amino-acid biosynthesis; L-lysine biosynthesis via DAP pathway; (S)-tetrahydrodipicolinate from L-aspartate: step 3/4. In terms of biological role, catalyzes the condensation of (S)-aspartate-beta-semialdehyde [(S)-ASA] and pyruvate to 4-hydroxy-tetrahydrodipicolinate (HTPA). The sequence is that of 4-hydroxy-tetrahydrodipicolinate synthase from Streptococcus gordonii (strain Challis / ATCC 35105 / BCRC 15272 / CH1 / DL1 / V288).